The sequence spans 516 residues: Probable metalloreductase AIM14 (516 aa).

A run of 7 helical transmembrane segments spans residues 18-38 (IGYG…LLLL), 64-84 (LHLP…YSVI), 97-117 (LSYV…YILS), 128-148 (HMWL…AFVI), 168-188 (LLGF…TGVI), 195-215 (SFYM…PVHA), and 217-237 (PGVA…HALA). The Ferric oxidoreductase domain occupies 94-207 (LGRLSYVLLF…MVHQINAFAI (114 aa)). The FAD-binding FR-type domain maps to 238 to 363 (RVSFCMSSAV…GGTGISLGLP (126 aa)).

Belongs to the ferric reductase (FRE) family. AIM14 subfamily.

The protein resides in the membrane. Probable cell surface metalloreductase. May be involved in iron or copper homeostasis. This chain is Probable metalloreductase AIM14 (AIM14), found in Eremothecium gossypii (strain ATCC 10895 / CBS 109.51 / FGSC 9923 / NRRL Y-1056) (Yeast).